We begin with the raw amino-acid sequence, 316 residues long: Pantothenate kinase (316 aa).

95-102 (GSVAVGKS) is an ATP binding site.

It belongs to the prokaryotic pantothenate kinase family.

Its subcellular location is the cytoplasm. The enzyme catalyses (R)-pantothenate + ATP = (R)-4'-phosphopantothenate + ADP + H(+). The protein operates within cofactor biosynthesis; coenzyme A biosynthesis; CoA from (R)-pantothenate: step 1/5. The polypeptide is Pantothenate kinase (Hamiltonella defensa subsp. Acyrthosiphon pisum (strain 5AT)).